The chain runs to 419 residues: Creatine kinase S-type, mitochondrial (419 aa).

The N-terminal 39 residues, 1-39 (MASTFSKLLTGRNASLLFATLGTGALTTGYLLNKQNVCA), are a transit peptide targeting the mitochondrion. The segment at 40 to 64 (AAREQHKLFPPSADYPDLRKHNNCM) is cardiolipin-binding. The region spanning 46–132 (KLFPPSADYP…FDPVIKLRHN (87 aa)) is the Phosphagen kinase N-terminal domain. In terms of domain architecture, Phosphagen kinase C-terminal spans 159–401 (YVLSSRVRTG…NYLVDCEKKL (243 aa)). Residues 162–166 (SSRVR) and H225 contribute to the ATP site. Residue Y255 is modified to Phosphotyrosine. Residues R270, R326, 354 to 359 (RGTGGV), and D369 contribute to the ATP site. T356 is subject to Phosphothreonine.

The protein belongs to the ATP:guanido phosphotransferase family. In terms of assembly, exists as an octamer composed of four CKMT2 homodimers.

It is found in the mitochondrion inner membrane. The enzyme catalyses creatine + ATP = N-phosphocreatine + ADP + H(+). Functionally, reversibly catalyzes the transfer of phosphate between ATP and various phosphogens (e.g. creatine phosphate). Creatine kinase isoenzymes play a central role in energy transduction in tissues with large, fluctuating energy demands, such as skeletal muscle, heart, brain and spermatozoa. The chain is Creatine kinase S-type, mitochondrial (CKMT2) from Bos taurus (Bovine).